Consider the following 335-residue polypeptide: MASGGGSLGLIVFLLLLQPKPCEAWAAASVLSTSGFPSGFSEAPRDNPPPPTRVRMSKATTRSPFMNFSLVCGQPFMKIMGGVDAEEGKWPWQVSVRVRHMHVCGGSLINSQWVLTAAHCIYSRIQYNVKVGDRSVYRQNTSLVIPIKTIFVHPKFSTTIVVKNDIALLKLQHPVNFTTNIYPVCIPSESFPVKAGTKCWVTGWGKLVPGAPDVPTEILQEVDQNVILYEECNEMLKKATSSSVDLVKRGMVCGYKERGKDACQGDSGGPMSCEFENKWVQVGVVSWGISCGRKGYPGVYTDVAFYSKWLIAVVNQADCLHPVVFLVLLLCSLTS.

An N-terminal signal peptide occupies residues 1 to 24 (MASGGGSLGLIVFLLLLQPKPCEA). The N-linked (GlcNAc...) asparagine glycan is linked to Asn67. In terms of domain architecture, Peptidase S1 spans 79–315 (IMGGVDAEEG…YSKWLIAVVN (237 aa)). Cys104 and Cys120 are disulfide-bonded. The Charge relay system role is filled by His119. Asn140 carries N-linked (GlcNAc...) asparagine glycosylation. Catalysis depends on Asp165, which acts as the Charge relay system. N-linked (GlcNAc...) asparagine glycosylation is present at Asn176. Intrachain disulfides connect Cys199/Cys273, Cys232/Cys253, and Cys263/Cys291. Residue Ser267 is the Charge relay system of the active site.

This sequence belongs to the peptidase S1 family. In terms of tissue distribution, testis-specific. Mainly detected in round spermatids at all the eminiferous epithelial stages (at protein level).

Its subcellular location is the cytoplasm. The protein localises to the cell membrane. Functionally, plays a role in spermatogenesis. Involved in germ cell survival during meiosis. Lacks protease activity in vitro. This chain is Serine protease 42, found in Mus musculus (Mouse).